Here is a 644-residue protein sequence, read N- to C-terminus: Exoribonuclease 2 (644 aa).

The RNB domain occupies 189-516 (REDLTALDFV…NHRLLKAVIK (328 aa)). Residues 561-643 (DTRFAAEIVD…ETRSIIARPV (83 aa)) form the S1 motif domain.

This sequence belongs to the RNR ribonuclease family. RNase II subfamily.

The protein localises to the cytoplasm. The enzyme catalyses Exonucleolytic cleavage in the 3'- to 5'-direction to yield nucleoside 5'-phosphates.. Involved in mRNA degradation. Hydrolyzes single-stranded polyribonucleotides processively in the 3' to 5' direction. The polypeptide is Exoribonuclease 2 (Escherichia coli (strain SMS-3-5 / SECEC)).